Here is a 368-residue protein sequence, read N- to C-terminus: D-alanine--D-alanine ligase (368 aa).

The region spanning 145 to 348 is the ATP-grasp domain; that stretch reads KRLLQGAGLH…YQDLITTLIE (204 aa). 175-230 serves as a coordination point for ATP; the sequence is ADQLGLPLFIKPANQGSSVGVNKATTEAEFTAAIEEAFSYDHKVLIEAAIKGREIE. Mg(2+)-binding residues include Asp302, Glu315, and Asn317.

Belongs to the D-alanine--D-alanine ligase family. Mg(2+) serves as cofactor. Requires Mn(2+) as cofactor.

The protein resides in the cytoplasm. The catalysed reaction is 2 D-alanine + ATP = D-alanyl-D-alanine + ADP + phosphate + H(+). Its pathway is cell wall biogenesis; peptidoglycan biosynthesis. Its function is as follows. Cell wall formation. This is D-alanine--D-alanine ligase from Shouchella clausii (strain KSM-K16) (Alkalihalobacillus clausii).